We begin with the raw amino-acid sequence, 63 residues long: Prokaryotic ubiquitin-like protein Pup (63 aa).

The segment covering 1 to 11 has biased composition (polar residues); that stretch reads MPQKFEQMQSA. Residues 1-28 form a disordered region; sequence MPQKFEQMQSAEQKHDEDETIAQAGTQI. The ARC ATPase binding stretch occupies residues 19–57; the sequence is ETIAQAGTQIDDTVDALDAVLDDIESVLESNAEEYVGSF. Glu63 is covalently cross-linked (Isoglutamyl lysine isopeptide (Glu-Lys) (interchain with K-? in acceptor proteins)).

It belongs to the prokaryotic ubiquitin-like protein family. As to quaternary structure, strongly interacts with the proteasome-associated ATPase ARC through a hydrophobic interface; the interacting region of Pup lies in its C-terminal half. There is one Pup binding site per ARC hexamer ring.

The protein operates within protein degradation; proteasomal Pup-dependent pathway. In terms of biological role, protein modifier that is covalently attached to lysine residues of substrate proteins, thereby targeting them for proteasomal degradation. The tagging system is termed pupylation. The protein is Prokaryotic ubiquitin-like protein Pup (pup) of Bifidobacterium adolescentis (strain ATCC 15703 / DSM 20083 / NCTC 11814 / E194a).